Reading from the N-terminus, the 298-residue chain is Oxygen-dependent coproporphyrinogen-III oxidase (298 aa).

A substrate-binding site is contributed by S90. The a divalent metal cation site is built by H94 and H104. Residue H104 is the Proton donor of the active site. 106–108 (NVR) lines the substrate pocket. Residues H143 and H173 each contribute to the a divalent metal cation site. Positions 238–273 (YVEFNLVWDRGTLFGLQSGGRTESILMSLPPIVKWR) are important for dimerization. 256 to 258 (GGR) is a binding site for substrate.

Belongs to the aerobic coproporphyrinogen-III oxidase family. Homodimer. A divalent metal cation is required as a cofactor.

It is found in the cytoplasm. It carries out the reaction coproporphyrinogen III + O2 + 2 H(+) = protoporphyrinogen IX + 2 CO2 + 2 H2O. It functions in the pathway porphyrin-containing compound metabolism; protoporphyrin-IX biosynthesis; protoporphyrinogen-IX from coproporphyrinogen-III (O2 route): step 1/1. Involved in the heme biosynthesis. Catalyzes the aerobic oxidative decarboxylation of propionate groups of rings A and B of coproporphyrinogen-III to yield the vinyl groups in protoporphyrinogen-IX. In Dechloromonas aromatica (strain RCB), this protein is Oxygen-dependent coproporphyrinogen-III oxidase.